Reading from the N-terminus, the 252-residue chain is 5-oxoprolinase subunit A (252 aa).

The protein belongs to the LamB/PxpA family. In terms of assembly, forms a complex composed of PxpA, PxpB and PxpC.

It catalyses the reaction 5-oxo-L-proline + ATP + 2 H2O = L-glutamate + ADP + phosphate + H(+). Its function is as follows. Catalyzes the cleavage of 5-oxoproline to form L-glutamate coupled to the hydrolysis of ATP to ADP and inorganic phosphate. The polypeptide is 5-oxoprolinase subunit A (Mycolicibacterium paratuberculosis (strain ATCC BAA-968 / K-10) (Mycobacterium paratuberculosis)).